A 389-amino-acid polypeptide reads, in one-letter code: Sterol methyltransferase-like 1 (389 aa).

A helical transmembrane segment spans residues 25-45; it reads IAAGVTAAVVIGGYIWIITEL.

Belongs to the class I-like SAM-binding methyltransferase superfamily. Erg6/SMT family.

Its subcellular location is the microsome membrane. Unable to convert squalene, botryococcene, cycloartenol, zymosterol or lanosterol to mono-, di-, tri- or tetramethylated derivatives. The protein is Sterol methyltransferase-like 1 (SMT-1) of Botryococcus braunii (Green alga).